The following is a 201-amino-acid chain: Glutathione peroxidase 1 (201 aa).

Ser-32 is subject to Phosphoserine. The active site involves Sec-47. Residue Sec-47 is a non-standard amino acid, selenocysteine. N6-acetyllysine; alternate is present on residues Lys-86, Lys-112, and Lys-146. An N6-succinyllysine; alternate mark is found at Lys-86, Lys-112, and Lys-146. Residues Ser-195 and Ser-199 each carry the phosphoserine modification.

This sequence belongs to the glutathione peroxidase family. Homotetramer. Interacts with MIEN1. Post-translationally, during periods of oxidative stress, Sec-47 may react with a superoxide radical, irreversibly lose hydroselenide and be converted to dehydroalanine.

It localises to the cytoplasm. It is found in the mitochondrion. The catalysed reaction is 2 glutathione + H2O2 = glutathione disulfide + 2 H2O. The enzyme catalyses a hydroperoxy polyunsaturated fatty acid + 2 glutathione = a hydroxy polyunsaturated fatty acid + glutathione disulfide + H2O. It carries out the reaction tert-butyl hydroperoxide + 2 glutathione = tert-butanol + glutathione disulfide + H2O. It catalyses the reaction cumene hydroperoxide + 2 glutathione = 2-phenylpropan-2-ol + glutathione disulfide + H2O. The catalysed reaction is (13S)-hydroperoxy-(9Z,11E)-octadecadienoate + 2 glutathione = (13S)-hydroxy-(9Z,11E)-octadecadienoate + glutathione disulfide + H2O. The enzyme catalyses (9S)-hydroperoxy-(10E,12Z)-octadecadienoate + 2 glutathione = (9S)-hydroxy-(10E,12Z)-octadecadienoate + glutathione disulfide + H2O. It carries out the reaction (5S)-hydroperoxy-(6E,8Z,11Z,14Z)-eicosatetraenoate + 2 glutathione = (5S)-hydroxy-(6E,8Z,11Z,14Z)-eicosatetraenoate + glutathione disulfide + H2O. It catalyses the reaction (12S)-hydroperoxy-(5Z,8Z,10E,14Z)-eicosatetraenoate + 2 glutathione = (12S)-hydroxy-(5Z,8Z,10E,14Z)-eicosatetraenoate + glutathione disulfide + H2O. The catalysed reaction is (12R)-hydroperoxy-(5Z,8Z,10E,14Z)-eicosatetraenoate + 2 glutathione = (12R)-hydroxy-(5Z,8Z,10E,14Z)-eicosatetraenoate + glutathione disulfide + H2O. The enzyme catalyses (15S)-hydroperoxy-(5Z,8Z,11Z,13E)-eicosatetraenoate + 2 glutathione = (15S)-hydroxy-(5Z,8Z,11Z,13E)-eicosatetraenoate + glutathione disulfide + H2O. It carries out the reaction (5S)-hydroperoxy-(6E,8Z,11Z,14Z,17Z)-eicosapentaenoate + 2 glutathione = (5S)-hydroxy-(6E,8Z,11Z,14Z,17Z)-eicosapentaenoate + glutathione disulfide + H2O. It catalyses the reaction (12S)-hydroperoxy-(5Z,8Z,10E,14Z,17Z)-eicosapentaenoate + 2 glutathione = (12S)-hydroxy-(5Z,8Z,10E,14Z,17Z)-eicosapentaenoate + glutathione disulfide + H2O. The catalysed reaction is (15S)-hydroperoxy-(5Z,8Z,11Z,13E,17Z)-eicosapentaenoate + 2 glutathione = (15S)-hydroxy-(5Z,8Z,11Z,13E,17Z)-eicosapentaenoate + glutathione disulfide + H2O. The enzyme catalyses (15S)-hydroperoxy-(11Z,13E)-eicosadienoate + 2 glutathione = (15S)-hydroxy-(11Z,13E)-eicosadienoate + glutathione disulfide + H2O. It carries out the reaction (17S)-hydroperoxy-(4Z,7Z,10Z,13Z,15E,19Z)-docosahexaenoate + 2 glutathione = (17S)-hydroxy-(4Z,7Z,10Z,13Z,15E,19Z)-docosahexaenoate + glutathione disulfide + H2O. Its function is as follows. Catalyzes the reduction of hydroperoxides in a glutathione-dependent manner thus regulating cellular redox homeostasis. Can reduce small soluble hydroperoxides such as H2O2, cumene hydroperoxide and tert-butyl hydroperoxide, as well as several fatty acid-derived hydroperoxides. In platelets catalyzes the reduction of 12-hydroperoxyeicosatetraenoic acid, the primary product of the arachidonate 12-lipoxygenase pathway. The polypeptide is Glutathione peroxidase 1 (GPX1) (Macaca fuscata fuscata (Japanese macaque)).